Reading from the N-terminus, the 207-residue chain is Peptidyl-tRNA hydrolase (207 aa).

Residue Tyr-15 coordinates tRNA. The active-site Proton acceptor is His-20. TRNA-binding residues include Phe-66, Asn-68, and Asn-114. A disordered region spans residues 187 to 207; sequence HTTKPPRPKPARPATAESDKG. The span at 198–207 shows a compositional bias: low complexity; it reads RPATAESDKG.

This sequence belongs to the PTH family. Monomer.

Its subcellular location is the cytoplasm. It carries out the reaction an N-acyl-L-alpha-aminoacyl-tRNA + H2O = an N-acyl-L-amino acid + a tRNA + H(+). Functionally, hydrolyzes ribosome-free peptidyl-tRNAs (with 1 or more amino acids incorporated), which drop off the ribosome during protein synthesis, or as a result of ribosome stalling. Catalyzes the release of premature peptidyl moieties from peptidyl-tRNA molecules trapped in stalled 50S ribosomal subunits, and thus maintains levels of free tRNAs and 50S ribosomes. This chain is Peptidyl-tRNA hydrolase, found in Delftia acidovorans (strain DSM 14801 / SPH-1).